The primary structure comprises 263 residues: Energy-coupling factor transporter transmembrane protein EcfT (263 aa).

4 helical membrane-spanning segments follow: residues 22 to 42 (IIFA…ATNI), 69 to 89 (ILFL…EGAV), 105 to 125 (LAII…LVTL), and 243 to 263 (TGLI…RGGF).

The protein belongs to the energy-coupling factor EcfT family. In terms of assembly, forms a stable energy-coupling factor (ECF) transporter complex composed of 2 membrane-embedded substrate-binding proteins (S component), 2 ATP-binding proteins (A component) and 2 transmembrane proteins (T component). May be able to interact with more than 1 S component at a time.

The protein resides in the cell membrane. Functionally, transmembrane (T) component of an energy-coupling factor (ECF) ABC-transporter complex. Unlike classic ABC transporters this ECF transporter provides the energy necessary to transport a number of different substrates. The chain is Energy-coupling factor transporter transmembrane protein EcfT from Exiguobacterium sibiricum (strain DSM 17290 / CCUG 55495 / CIP 109462 / JCM 13490 / 255-15).